Reading from the N-terminus, the 216-residue chain is Octanoyltransferase (216 aa).

Positions Asn-35 to Phe-213 constitute a BPL/LPL catalytic domain. Residues Arg-77–His-84, Ser-144–Gly-146, and Gly-157–Ser-159 contribute to the substrate site. Cys-175 acts as the Acyl-thioester intermediate in catalysis.

This sequence belongs to the LipB family.

It is found in the cytoplasm. It carries out the reaction octanoyl-[ACP] + L-lysyl-[protein] = N(6)-octanoyl-L-lysyl-[protein] + holo-[ACP] + H(+). It functions in the pathway protein modification; protein lipoylation via endogenous pathway; protein N(6)-(lipoyl)lysine from octanoyl-[acyl-carrier-protein]: step 1/2. In terms of biological role, catalyzes the transfer of endogenously produced octanoic acid from octanoyl-acyl-carrier-protein onto the lipoyl domains of lipoate-dependent enzymes. Lipoyl-ACP can also act as a substrate although octanoyl-ACP is likely to be the physiological substrate. This Prochlorococcus marinus (strain MIT 9215) protein is Octanoyltransferase.